We begin with the raw amino-acid sequence, 213 residues long: uncharacterized protein (213 aa).

This is an uncharacterized protein from Aquifex aeolicus (strain VF5).